Here is a 316-residue protein sequence, read N- to C-terminus: Probable cell division protein WhiA (316 aa).

The H-T-H motif DNA-binding region spans 274-308 (SLKELGEMVSTGVISKSGVNHRLRKIDEIAEKLRN).

It belongs to the WhiA family.

Its function is as follows. Involved in cell division and chromosome segregation. The polypeptide is Probable cell division protein WhiA (Macrococcus caseolyticus (strain JCSC5402) (Macrococcoides caseolyticum)).